We begin with the raw amino-acid sequence, 380 residues long: Cytochrome b (380 aa).

Transmembrane regions (helical) follow at residues 34–54 (FGSLLGICLTTQILTGLLLAA), 78–99 (WLIRNLHANGASFFFICIYMHV), 114–134 (WNTGVILLLTLMATAFVGYVL), and 179–199 (FFTLHFLLPFMIMGLTLIHLT). The heme b site is built by histidine 84 and histidine 98. The heme b site is built by histidine 183 and histidine 197. Histidine 202 serves as a coordination point for a ubiquinone. The next 4 helical transmembrane spans lie at 227–247 (LKDILGFMLMFLPLMTLALFS), 289–309 (LGGVLALAASMLVLFLAPLLH), 321–341 (LSQLLFWTLTANLLILTWVGS), and 348–368 (FMIIGQLASLTYFTILLILFP).

Belongs to the cytochrome b family. As to quaternary structure, the cytochrome bc1 complex contains 11 subunits: 3 respiratory subunits (MT-CYB, CYC1 and UQCRFS1), 2 core proteins (UQCRC1 and UQCRC2) and 6 low-molecular weight proteins (UQCRH/QCR6, UQCRB/QCR7, UQCRQ/QCR8, UQCR10/QCR9, UQCR11/QCR10 and a cleavage product of UQCRFS1). This cytochrome bc1 complex then forms a dimer. Requires heme b as cofactor.

Its subcellular location is the mitochondrion inner membrane. In terms of biological role, component of the ubiquinol-cytochrome c reductase complex (complex III or cytochrome b-c1 complex) that is part of the mitochondrial respiratory chain. The b-c1 complex mediates electron transfer from ubiquinol to cytochrome c. Contributes to the generation of a proton gradient across the mitochondrial membrane that is then used for ATP synthesis. The chain is Cytochrome b (MT-CYB) from Balearica pavonina (Black crowned-crane).